A 134-amino-acid polypeptide reads, in one-letter code: Small ribosomal subunit protein uS9c (134 aa).

The protein belongs to the universal ribosomal protein uS9 family.

The protein localises to the plastid. The protein resides in the chloroplast. This Thalassiosira pseudonana (Marine diatom) protein is Small ribosomal subunit protein uS9c (rps9).